The primary structure comprises 100 residues: Small ribosomal subunit protein uS14c (100 aa).

It belongs to the universal ribosomal protein uS14 family. In terms of assembly, part of the 30S ribosomal subunit.

Its subcellular location is the plastid. It localises to the chloroplast. Functionally, binds 16S rRNA, required for the assembly of 30S particles. The polypeptide is Small ribosomal subunit protein uS14c (Pelargonium hortorum (Common geranium)).